The primary structure comprises 422 residues: Tryptophan synthase beta chain 1 (422 aa).

Lys-107 is subject to N6-(pyridoxal phosphate)lysine.

It belongs to the TrpB family. As to quaternary structure, tetramer of two alpha and two beta chains. Pyridoxal 5'-phosphate is required as a cofactor.

The enzyme catalyses (1S,2R)-1-C-(indol-3-yl)glycerol 3-phosphate + L-serine = D-glyceraldehyde 3-phosphate + L-tryptophan + H2O. It participates in amino-acid biosynthesis; L-tryptophan biosynthesis; L-tryptophan from chorismate: step 5/5. The beta subunit is responsible for the synthesis of L-tryptophan from indole and L-serine. This chain is Tryptophan synthase beta chain 1 (trpB1), found in Sulfurisphaera tokodaii (strain DSM 16993 / JCM 10545 / NBRC 100140 / 7) (Sulfolobus tokodaii).